Here is a 520-residue protein sequence, read N- to C-terminus: Alpha-1B adrenergic receptor (520 aa).

Residues 1 to 45 are Extracellular-facing; it reads MNPDLDTGHNTSAPAHWGELKNANFTGPNQTSSNSTLPQLDITRA. N-linked (GlcNAc...) asparagine glycosylation is found at asparagine 10, asparagine 24, asparagine 29, and asparagine 34. A helical transmembrane segment spans residues 46–70; that stretch reads ISVGLVLGAFILFAIVGNILVILSV. Topologically, residues 71 to 83 are cytoplasmic; the sequence is ACNRHLRTPTNYF. Residues 84–105 traverse the membrane as a helical segment; it reads IVNLAMADLLLSFTVLPFSAAL. Over 106 to 115 the chain is Extracellular; it reads EVLGYWVLGR. A helical membrane pass occupies residues 116–141; the sequence is IFCDIWAAVDVLCCTASILSLCAISI. Residues cysteine 118 and cysteine 195 are joined by a disulfide bond. Residues 142–161 lie on the Cytoplasmic side of the membrane; it reads DRYIGVRYSLQYPTLVTRRK. The chain crosses the membrane as a helical span at residues 162–184; the sequence is AILALLSVWVLSTVISIGPLLGW. Residues 185–201 are Extracellular-facing; the sequence is KEPAPNDDKECGVTEEP. A helical transmembrane segment spans residues 202 to 224; it reads FYALFSSLGSFYIPLAVILVMYC. Topologically, residues 225-295 are cytoplasmic; that stretch reads RVYIVAKRTT…FSREKKAAKT (71 aa). At threonine 264 the chain carries Phosphothreonine. A helical membrane pass occupies residues 296–319; it reads LGIVVGMFILCWLPFFIALPLGSL. Residues 320–326 are Extracellular-facing; sequence FSTLKPP. The chain crosses the membrane as a helical span at residues 327 to 351; that stretch reads DAVFKVVFWLGYFNSCLNPIIYPCS. Residues 352–520 are Cytoplasmic-facing; the sequence is SKEFKRAFVR…SNMPLAPGQF (169 aa). Cysteine 365 carries S-palmitoyl cysteine lipidation. The short motif at 368–380 is the Nuclear localization signal element; sequence RGRGRRRRRRRRR. 2 disordered regions span residues 394–432 and 479–520; these read GGSL…GYLG and LTEP…PGQF.

Belongs to the G-protein coupled receptor 1 family. Adrenergic receptor subfamily. ADRA1B sub-subfamily. As to quaternary structure, homo- and heterooligomer. Heterooligomerizes with ADRA1B homooligomers in cardiac myocytes. Interacts with CAVIN4.

Its subcellular location is the nucleus membrane. The protein resides in the cell membrane. It localises to the cytoplasm. The protein localises to the membrane. It is found in the caveola. In terms of biological role, this alpha-adrenergic receptor mediates its action by association with G proteins that activate a phosphatidylinositol-calcium second messenger system. Its effect is mediated by G(q) and G(11) proteins. Nuclear ADRA1A-ADRA1B heterooligomers regulate phenylephrine (PE)-stimulated ERK signaling in cardiac myocytes. The protein is Alpha-1B adrenergic receptor (ADRA1B) of Homo sapiens (Human).